Here is a 394-residue protein sequence, read N- to C-terminus: Anthocyanidin 3-O-glucosyltransferase 6 (394 aa).

Aspartate 37 serves as the catalytic Charge relay. UDP-alpha-D-glucose is bound by residues threonine 59, alanine 267, glutamine 269, histidine 284, tryptophan 287, asparagine 288, serine 289, and glutamate 292. An anthocyanidin is bound at residue alanine 307. UDP-alpha-D-glucose contacts are provided by glutamate 308 and glutamine 309.

Belongs to the UDP-glycosyltransferase family. In terms of tissue distribution, expressed in cotyledons and leaves.

The enzyme catalyses an anthocyanidin + UDP-alpha-D-glucose + H(+) = an anthocyanidin 3-O-beta-D-glucoside + UDP. Its pathway is pigment biosynthesis; anthocyanin biosynthesis. Its function is as follows. In the presence of other necessary color factors, this glycosylation reaction allows the accumulation of anthocyanin pigments. May be involved in glycosylation of unstable cyanohydrins to produce stable cyanoglucosides. This is Anthocyanidin 3-O-glucosyltransferase 6 (GT6) from Manihot esculenta (Cassava).